Here is a 229-residue protein sequence, read N- to C-terminus: Phosphoglycolate phosphatase (229 aa).

Residue Asp-13 is the Nucleophile of the active site. Mg(2+) is bound by residues Asp-13, Asp-15, and Asp-178.

This sequence belongs to the HAD-like hydrolase superfamily. CbbY/CbbZ/Gph/YieH family. Mg(2+) serves as cofactor.

The catalysed reaction is 2-phosphoglycolate + H2O = glycolate + phosphate. Its pathway is organic acid metabolism; glycolate biosynthesis; glycolate from 2-phosphoglycolate: step 1/1. In terms of biological role, specifically catalyzes the dephosphorylation of 2-phosphoglycolate. Is involved in the dissimilation of the intracellular 2-phosphoglycolate formed during the DNA repair of 3'-phosphoglycolate ends, a major class of DNA lesions induced by oxidative stress. The polypeptide is Phosphoglycolate phosphatase (Photobacterium profundum (strain SS9)).